Reading from the N-terminus, the 392-residue chain is ATP phosphoribosyltransferase regulatory subunit (392 aa).

It belongs to the class-II aminoacyl-tRNA synthetase family. HisZ subfamily. In terms of assembly, heteromultimer composed of HisG and HisZ subunits.

It localises to the cytoplasm. It participates in amino-acid biosynthesis; L-histidine biosynthesis; L-histidine from 5-phospho-alpha-D-ribose 1-diphosphate: step 1/9. Functionally, required for the first step of histidine biosynthesis. May allow the feedback regulation of ATP phosphoribosyltransferase activity by histidine. This is ATP phosphoribosyltransferase regulatory subunit from Synechococcus sp. (strain WH7803).